The sequence spans 142 residues: Hemoglobin subunit alpha (142 aa).

One can recognise a Globin domain in the interval 2–142 (VLSANDKSNV…VGNVLTSKYR (141 aa)). O2 is bound at residue H59. Position 88 (H88) interacts with heme b.

Belongs to the globin family. As to quaternary structure, heterotetramer of two alpha chains and two beta chains. Red blood cells.

Its function is as follows. Involved in oxygen transport from the lung to the various peripheral tissues. The chain is Hemoglobin subunit alpha (HBA) from Aptenodytes forsteri (Emperor penguin).